The following is a 541-amino-acid chain: Serine/threonine-protein kinase akt-1 (541 aa).

In terms of domain architecture, PH spans 15–118 (DVVIEGWLHK…WIHAIESISK (104 aa)). Residues 193 to 450 (FDFLKVLGKG…ALEICRADFF (258 aa)) form the Protein kinase domain. Residues 199–207 (LGKGTFGKV) and Lys-222 contribute to the ATP site. The active-site Proton acceptor is the Asp-316. The residue at position 350 (Thr-350) is a Phosphothreonine. The region spanning 451 to 528 (RTVDWEATYR…HNVMGSINRI (78 aa)) is the AGC-kinase C-terminal domain. At Ser-517 the chain carries Phosphoserine.

Belongs to the protein kinase superfamily. AGC Ser/Thr protein kinase family. RAC subfamily. In terms of assembly, interacts with pdk-1, sgk-1, akt-2 and daf-16. Part of a complex containing sgk-1, akt-1 and akt-2. Interacts with cmd-1 in the presence of Ca(2+). Interacts with let-92 phosphatase regulatory subunit pptr-1. It depends on Mg(2+) as a cofactor. Expressed in neurons, muscle cells of the pharynx, rectal gland cells, vulva and spermatheca.

It carries out the reaction L-seryl-[protein] + ATP = O-phospho-L-seryl-[protein] + ADP + H(+). The catalysed reaction is L-threonyl-[protein] + ATP = O-phospho-L-threonyl-[protein] + ADP + H(+). With respect to regulation, phosphorylated and activated by pdk-1. In terms of biological role, acts downstream of PI3 kinase age-1 and kinase pdk-1 in the daf-2/insulin receptor-like transduction pathway. Phosphorylates Forkhead-related daf-16 and the longevity-promoting skn-1 transcription factors, which inhibits their entry into the nucleus and antagonizes their functions. Plays a role in maintaining the gonadal basement membrane through it's role in inhibiting daf-16 activity. Has an essential role in regulating developmental arrest at the dauer stage. Plays a role in immune function and pathogen resistance. Regulates salt chemotaxis learning. Downstream of age-1 and together with akt-2 and sgk-1, promotes cell survival during embryonic development. This is Serine/threonine-protein kinase akt-1 from Caenorhabditis elegans.